Reading from the N-terminus, the 522-residue chain is Protein nucleotidyltransferase YdiU (522 aa).

ATP is bound by residues Gly-101, Gly-103, Arg-104, Lys-123, Asp-135, Gly-136, Arg-193, and Arg-200. The active-site Proton acceptor is Asp-270. 2 residues coordinate Mg(2+): Asn-271 and Asp-280. Position 280 (Asp-280) interacts with ATP.

It belongs to the SELO family. Requires Mg(2+) as cofactor. Mn(2+) is required as a cofactor.

It catalyses the reaction L-seryl-[protein] + ATP = 3-O-(5'-adenylyl)-L-seryl-[protein] + diphosphate. It carries out the reaction L-threonyl-[protein] + ATP = 3-O-(5'-adenylyl)-L-threonyl-[protein] + diphosphate. The enzyme catalyses L-tyrosyl-[protein] + ATP = O-(5'-adenylyl)-L-tyrosyl-[protein] + diphosphate. The catalysed reaction is L-histidyl-[protein] + UTP = N(tele)-(5'-uridylyl)-L-histidyl-[protein] + diphosphate. It catalyses the reaction L-seryl-[protein] + UTP = O-(5'-uridylyl)-L-seryl-[protein] + diphosphate. It carries out the reaction L-tyrosyl-[protein] + UTP = O-(5'-uridylyl)-L-tyrosyl-[protein] + diphosphate. Its function is as follows. Nucleotidyltransferase involved in the post-translational modification of proteins. It can catalyze the addition of adenosine monophosphate (AMP) or uridine monophosphate (UMP) to a protein, resulting in modifications known as AMPylation and UMPylation. The polypeptide is Protein nucleotidyltransferase YdiU (Flavobacterium johnsoniae (strain ATCC 17061 / DSM 2064 / JCM 8514 / BCRC 14874 / CCUG 350202 / NBRC 14942 / NCIMB 11054 / UW101) (Cytophaga johnsonae)).